Here is a 185-residue protein sequence, read N- to C-terminus: GTP cyclohydrolase 1 (185 aa).

3 residues coordinate Zn(2+): cysteine 76, histidine 79, and cysteine 147.

The protein belongs to the GTP cyclohydrolase I family. In terms of assembly, toroid-shaped homodecamer, composed of two pentamers of five dimers.

It carries out the reaction GTP + H2O = 7,8-dihydroneopterin 3'-triphosphate + formate + H(+). It functions in the pathway cofactor biosynthesis; 7,8-dihydroneopterin triphosphate biosynthesis; 7,8-dihydroneopterin triphosphate from GTP: step 1/1. This chain is GTP cyclohydrolase 1, found in Clostridium perfringens (strain 13 / Type A).